A 419-amino-acid chain; its full sequence is UDP-N-acetylglucosamine 1-carboxyvinyltransferase (419 aa).

22 to 23 serves as a coordination point for phosphoenolpyruvate; it reads KN. Arginine 91 lines the UDP-N-acetyl-alpha-D-glucosamine pocket. Cysteine 115 (proton donor) is an active-site residue. Cysteine 115 carries the 2-(S-cysteinyl)pyruvic acid O-phosphothioketal modification. UDP-N-acetyl-alpha-D-glucosamine-binding positions include 120–124, 160–163, aspartate 305, and valine 327; these read RPVDL and KVSV.

Belongs to the EPSP synthase family. MurA subfamily.

Its subcellular location is the cytoplasm. It catalyses the reaction phosphoenolpyruvate + UDP-N-acetyl-alpha-D-glucosamine = UDP-N-acetyl-3-O-(1-carboxyvinyl)-alpha-D-glucosamine + phosphate. It participates in cell wall biogenesis; peptidoglycan biosynthesis. In terms of biological role, cell wall formation. Adds enolpyruvyl to UDP-N-acetylglucosamine. This is UDP-N-acetylglucosamine 1-carboxyvinyltransferase from Shigella boydii serotype 18 (strain CDC 3083-94 / BS512).